The chain runs to 911 residues: Ribonuclease J (911 aa).

Residues 1-70 constitute a chloroplast transit peptide; sequence MMKPASLQGF…VTSAPASGTS (70 aa). The interval 58–90 is disordered; the sequence is SCSVTSAPASGTSSSSKTPRRRSGRLEGVGKSM. The segment covering 63 to 74 has biased composition (low complexity); sequence SAPASGTSSSSK. Residues H175, H177, D179, H180, H245, and D267 each contribute to the Zn(2+) site. Substrate-binding positions include 336-338 and 468-472; these read ASN and HTSGH. Residue H494 participates in Zn(2+) binding. 2 disordered regions span residues 695-723 and 735-824; these read VEGNDKRSRAKKAPSQEASPKEVDRTLED and EETA…WKPE. 2 stretches are compositionally biased toward basic and acidic residues: residues 713–722 and 783–795; these read SPKEVDRTLE and ADTEPKAEGKENS. Positions 796–806 are enriched in acidic residues; sequence RDDDELADASD. Residues 813–877 enclose the Myb-like domain; the sequence is PKRVRKNKWK…QCKSLWASLI (65 aa).

Belongs to the metallo-beta-lactamase superfamily. RNA-metabolizing metallo-beta-lactamase-like family. Bacterial RNase J subfamily. As to quaternary structure, homodimer. May be a subunit of the RNA degradosome. Requires Zn(2+) as cofactor. As to expression, moslty expressed in inflorescences, seedlings, leaves, flowers and flower buds, and, to a lower extent, in stems, siliques and roots.

The protein resides in the plastid. It is found in the chloroplast. Essential protein required during embryogenesis, especially in initiating and maintaining the organization of shoot apical meristems (SAMs), cotyledons, and hypocotyls. Involved in auxin-mediated pathways during embryogenesis. RNase that has both endonuclease and 5'-3' exonuclease activities. Involved in RNA surveillance to prevent overaccumulation of antisense RNA. Probably involved in maturation of rRNA and in some organisms also mRNA maturation and/or decay. This is Ribonuclease J from Arabidopsis thaliana (Mouse-ear cress).